A 441-amino-acid polypeptide reads, in one-letter code: Glutamate--tRNA ligase 2 (441 aa).

Residues 9 to 19 carry the 'HIGH' region motif; sequence PSPTGYIHVGN. Residues 239 to 243 carry the 'KMSKS' region motif; sequence ALSKR. ATP is bound at residue Lys242.

The protein belongs to the class-I aminoacyl-tRNA synthetase family. Glutamate--tRNA ligase type 1 subfamily. Monomer.

The protein localises to the cytoplasm. It catalyses the reaction tRNA(Glu) + L-glutamate + ATP = L-glutamyl-tRNA(Glu) + AMP + diphosphate. Functionally, catalyzes the attachment of glutamate to tRNA(Glu) in a two-step reaction: glutamate is first activated by ATP to form Glu-AMP and then transferred to the acceptor end of tRNA(Glu). This is Glutamate--tRNA ligase 2 from Cereibacter sphaeroides (strain ATCC 17023 / DSM 158 / JCM 6121 / CCUG 31486 / LMG 2827 / NBRC 12203 / NCIMB 8253 / ATH 2.4.1.) (Rhodobacter sphaeroides).